The sequence spans 343 residues: Uroporphyrinogen decarboxylase (343 aa).

Substrate contacts are provided by residues 23-27 (RQAGR), Asp-73, Tyr-151, Ser-206, and His-322.

Belongs to the uroporphyrinogen decarboxylase family. Homodimer.

It is found in the cytoplasm. It catalyses the reaction uroporphyrinogen III + 4 H(+) = coproporphyrinogen III + 4 CO2. It participates in porphyrin-containing compound metabolism; protoporphyrin-IX biosynthesis; coproporphyrinogen-III from 5-aminolevulinate: step 4/4. Functionally, catalyzes the decarboxylation of four acetate groups of uroporphyrinogen-III to yield coproporphyrinogen-III. This is Uroporphyrinogen decarboxylase from Granulibacter bethesdensis (strain ATCC BAA-1260 / CGDNIH1).